Here is a 155-residue protein sequence, read N- to C-terminus: Myelin basic protein (155 aa).

Disordered stretches follow at residues Met-1–Thr-70 and Thr-109–Arg-155. At Ala-2 the chain carries N-acetylalanine. Composition is skewed to basic and acidic residues over residues Gly-37–Ala-49 and Lys-123–Gly-134.

The protein belongs to the myelin basic protein family.

It localises to the myelin membrane. Its function is as follows. This protein may function to maintain proper structure of myelin. The sequence is that of Myelin basic protein (MBP) from Heterodontus francisci (Horn shark).